The sequence spans 415 residues: Phosphoglycerate kinase (415 aa).

Residues 24–26 (DLN), arginine 39, 62–65 (HLGR), arginine 121, and arginine 161 contribute to the substrate site. ATP-binding positions include lysine 211, glycine 307, glutamate 338, and 367 to 370 (GGDS).

Belongs to the phosphoglycerate kinase family. In terms of assembly, monomer.

It is found in the cytoplasm. The catalysed reaction is (2R)-3-phosphoglycerate + ATP = (2R)-3-phospho-glyceroyl phosphate + ADP. It functions in the pathway carbohydrate degradation; glycolysis; pyruvate from D-glyceraldehyde 3-phosphate: step 2/5. The chain is Phosphoglycerate kinase from Micrococcus luteus (strain ATCC 4698 / DSM 20030 / JCM 1464 / CCM 169 / CCUG 5858 / IAM 1056 / NBRC 3333 / NCIMB 9278 / NCTC 2665 / VKM Ac-2230) (Micrococcus lysodeikticus).